The sequence spans 120 residues: Chemokine vCXCL1 (120 aa).

The protein belongs to the intercrine alpha (chemokine CxC) family. Interacts with host CXCR1 and CXCR2.

Functionally, acts as a functional chemokine, inducing calcium mobilization, chemotaxis, and degranulation of neutrophils. Contributes to the induction of neutrophil chemotaxis by interacting with host CXCR1 and CXCR2 receptors. The chain is Chemokine vCXCL1 (UL146) from Human cytomegalovirus (strain Merlin) (HHV-5).